We begin with the raw amino-acid sequence, 437 residues long: UDP-N-acetylmuramate--L-alanine ligase (437 aa).

An ATP-binding site is contributed by 108–114 (GAHGKTS).

The protein belongs to the MurCDEF family.

The protein localises to the cytoplasm. The enzyme catalyses UDP-N-acetyl-alpha-D-muramate + L-alanine + ATP = UDP-N-acetyl-alpha-D-muramoyl-L-alanine + ADP + phosphate + H(+). It participates in cell wall biogenesis; peptidoglycan biosynthesis. In terms of biological role, cell wall formation. This is UDP-N-acetylmuramate--L-alanine ligase from Staphylococcus aureus (strain JH9).